The chain runs to 100 residues: ATP-dependent Clp protease adapter protein ClpS (100 aa).

The protein belongs to the ClpS family. In terms of assembly, binds to the N-terminal domain of the chaperone ClpA.

Its function is as follows. Involved in the modulation of the specificity of the ClpAP-mediated ATP-dependent protein degradation. This is ATP-dependent Clp protease adapter protein ClpS from Nitratidesulfovibrio vulgaris (strain DSM 19637 / Miyazaki F) (Desulfovibrio vulgaris).